Consider the following 102-residue polypeptide: Large ribosomal subunit protein bL36m (102 aa).

The protein belongs to the bacterial ribosomal protein bL36 family. In terms of assembly, component of the mitochondrial ribosome large subunit (39S) which comprises a 16S rRNA and about 50 distinct proteins.

The protein resides in the mitochondrion. This chain is Large ribosomal subunit protein bL36m (Mrpl36), found in Mus musculus (Mouse).